Reading from the N-terminus, the 62-residue chain is Translational regulator CsrA (62 aa).

The protein belongs to the CsrA/RsmA family. As to quaternary structure, homodimer; the beta-strands of each monomer intercalate to form a hydrophobic core, while the alpha-helices form wings that extend away from the core.

It localises to the cytoplasm. Functionally, a key translational regulator that binds mRNA to regulate translation initiation and/or mRNA stability. Mediates global changes in gene expression, shifting from rapid growth to stress survival by linking envelope stress, the stringent response and the catabolite repression systems. Usually binds in the 5'-UTR; binding at or near the Shine-Dalgarno sequence prevents ribosome-binding, repressing translation, binding elsewhere in the 5'-UTR can activate translation and/or stabilize the mRNA. Its function is antagonized by small RNA(s). The polypeptide is Translational regulator CsrA (Haemophilus ducreyi (strain 35000HP / ATCC 700724)).